A 232-amino-acid polypeptide reads, in one-letter code: Flagellar L-ring protein (232 aa).

A signal peptide spans 1–21 (MQKNAAHTYAISSLLVLSLTG). The N-palmitoyl cysteine moiety is linked to residue C22. A lipid anchor (S-diacylglycerol cysteine) is attached at C22.

This sequence belongs to the FlgH family. The basal body constitutes a major portion of the flagellar organelle and consists of four rings (L,P,S, and M) mounted on a central rod.

The protein localises to the cell outer membrane. The protein resides in the bacterial flagellum basal body. Its function is as follows. Assembles around the rod to form the L-ring and probably protects the motor/basal body from shearing forces during rotation. In Shigella boydii serotype 4 (strain Sb227), this protein is Flagellar L-ring protein.